A 358-amino-acid chain; its full sequence is Heavy metal-associated isoprenylated plant protein 37 (358 aa).

The HMA domain maps to 12-75 (IQTFSLRVNI…KLVKAGKHAE (64 aa)). 2 residues coordinate a metal cation: Cys23 and Cys26. Disordered regions lie at residues 100 to 194 (QKGQ…QNTQ) and 332 to 358 (QQQSSHSHATNMSSEEDAGNNNSCNIM). A compositionally biased stretch (acidic residues) spans 128–141 (AEEDGDGSEEEDGD). Over residues 148–181 (ANQQQQQNVVNAKKNSGGAAMNNGNNGVNAASKK) the composition is skewed to low complexity. Composition is skewed to polar residues over residues 184 to 194 (QKQSNHNQNTQ) and 339 to 358 (HATNMSSEEDAGNNNSCNIM). Position 355 is a cysteine methyl ester (Cys355). The S-farnesyl cysteine moiety is linked to residue Cys355. The propeptide at 356-358 (NIM) is removed in mature form.

This sequence belongs to the HIPP family.

Heavy-metal-binding protein. This Arabidopsis thaliana (Mouse-ear cress) protein is Heavy metal-associated isoprenylated plant protein 37.